Reading from the N-terminus, the 96-residue chain is UPF0235 protein VP2619 (96 aa).

It belongs to the UPF0235 family.

The protein is UPF0235 protein VP2619 of Vibrio parahaemolyticus serotype O3:K6 (strain RIMD 2210633).